The sequence spans 265 residues: MKSWVIGNWKLNPTSLEQVQHLVTDLVEGVDAQTRSMDNCHLMLAPSFLHLSPVQQALNANSSTLKLAAQDVSALSAESGAYTGDVSAKQLKDMGVQWVIVGHSERRQYYKESNAVLLKKLLNSAEQGLGVILCIGESESDFEAGHTEQVLDEELQVIADFLQQLKPEQAGYAEQNLIIAYEPVWAIGTGKVPSVEQVTQIHRFIRQQLHSFDNKLDTTPVIYGGSVKPENAADFAASDQINGVLVGGAALQADSFLAIAKCFNN.

Substrate is bound at residue 8 to 10 (NWK). Histidine 103 functions as the Electrophile in the catalytic mechanism. Residue glutamate 182 is the Proton acceptor of the active site. Residues glycine 188, serine 226, and 247 to 248 (GG) contribute to the substrate site.

It belongs to the triosephosphate isomerase family. As to quaternary structure, homodimer.

The protein resides in the cytoplasm. The catalysed reaction is D-glyceraldehyde 3-phosphate = dihydroxyacetone phosphate. It functions in the pathway carbohydrate biosynthesis; gluconeogenesis. The protein operates within carbohydrate degradation; glycolysis; D-glyceraldehyde 3-phosphate from glycerone phosphate: step 1/1. Its function is as follows. Involved in the gluconeogenesis. Catalyzes stereospecifically the conversion of dihydroxyacetone phosphate (DHAP) to D-glyceraldehyde-3-phosphate (G3P). This Psychrobacter sp. (strain PRwf-1) protein is Triosephosphate isomerase.